Consider the following 932-residue polypeptide: Glycine dehydrogenase (decarboxylating) (932 aa).

K685 bears the N6-(pyridoxal phosphate)lysine mark.

The protein belongs to the GcvP family. In terms of assembly, the glycine cleavage system is composed of four proteins: P, T, L and H. Requires pyridoxal 5'-phosphate as cofactor.

It carries out the reaction N(6)-[(R)-lipoyl]-L-lysyl-[glycine-cleavage complex H protein] + glycine + H(+) = N(6)-[(R)-S(8)-aminomethyldihydrolipoyl]-L-lysyl-[glycine-cleavage complex H protein] + CO2. In terms of biological role, the glycine cleavage system catalyzes the degradation of glycine. The P protein binds the alpha-amino group of glycine through its pyridoxal phosphate cofactor; CO(2) is released and the remaining methylamine moiety is then transferred to the lipoamide cofactor of the H protein. In Brucella suis biovar 1 (strain 1330), this protein is Glycine dehydrogenase (decarboxylating).